A 388-amino-acid chain; its full sequence is Succinate--CoA ligase [ADP-forming] subunit beta (388 aa).

The 236-residue stretch at Lys-9–Leu-244 folds into the ATP-grasp domain. ATP contacts are provided by residues Lys-46, Gly-53 to Gly-55, Glu-99, Ala-102, and Glu-107. 2 residues coordinate Mg(2+): Asn-199 and Asp-213. Residues Asn-264 and Gly-321–Val-323 contribute to the substrate site.

The protein belongs to the succinate/malate CoA ligase beta subunit family. Heterotetramer of two alpha and two beta subunits. The cofactor is Mg(2+).

The enzyme catalyses succinate + ATP + CoA = succinyl-CoA + ADP + phosphate. It catalyses the reaction GTP + succinate + CoA = succinyl-CoA + GDP + phosphate. It functions in the pathway carbohydrate metabolism; tricarboxylic acid cycle; succinate from succinyl-CoA (ligase route): step 1/1. Functionally, succinyl-CoA synthetase functions in the citric acid cycle (TCA), coupling the hydrolysis of succinyl-CoA to the synthesis of either ATP or GTP and thus represents the only step of substrate-level phosphorylation in the TCA. The beta subunit provides nucleotide specificity of the enzyme and binds the substrate succinate, while the binding sites for coenzyme A and phosphate are found in the alpha subunit. This is Succinate--CoA ligase [ADP-forming] subunit beta from Glaesserella parasuis serovar 5 (strain SH0165) (Haemophilus parasuis).